We begin with the raw amino-acid sequence, 393 residues long: Mitogen-activated protein kinase 10 (393 aa).

In terms of domain architecture, Protein kinase spans 60–345 (KPPIRPIGRG…VKEALAHPYL (286 aa)). ATP contacts are provided by residues 66-74 (IGRGACGIV) and Lys89. Asp186 (proton acceptor) is an active-site residue. Thr218 bears the Phosphothreonine mark. The TXY motif lies at 218–220 (TEY). Tyr220 is modified (phosphotyrosine). Thr223 bears the Phosphothreonine mark.

The protein belongs to the protein kinase superfamily. CMGC Ser/Thr protein kinase family. MAP kinase subfamily. As to quaternary structure, interacts with MKK2. Dually phosphorylated on Thr-218 and Tyr-220, which activates the enzyme.

It catalyses the reaction L-seryl-[protein] + ATP = O-phospho-L-seryl-[protein] + ADP + H(+). The catalysed reaction is L-threonyl-[protein] + ATP = O-phospho-L-threonyl-[protein] + ADP + H(+). With respect to regulation, activated by threonine and tyrosine phosphorylation. The protein is Mitogen-activated protein kinase 10 (MPK10) of Arabidopsis thaliana (Mouse-ear cress).